A 419-amino-acid polypeptide reads, in one-letter code: Large ribosomal subunit protein uL4 (419 aa).

Alanine 2 is modified (N-acetylalanine). Lysine 14 carries the N6-acetyllysine modification. Position 97 is an omega-N-methylarginine (arginine 97). An N6-acetyllysine modification is found at lysine 106. Lysine 239 participates in a covalent cross-link: Glycyl lysine isopeptide (Lys-Gly) (interchain with G-Cter in SUMO2). N6-acetyllysine is present on lysine 259. Threonine 266 bears the Phosphothreonine mark. 2 positions are modified to phosphoserine: serine 290 and serine 295. Arginine 300 carries the post-translational modification Citrulline. Lysine 327 participates in a covalent cross-link: Glycyl lysine isopeptide (Lys-Gly) (interchain with G-Cter in SUMO2). An N6-acetyllysine mark is found at lysine 333 and lysine 353. N6-acetyllysine; alternate is present on lysine 364. A Glycyl lysine isopeptide (Lys-Gly) (interchain with G-Cter in SUMO1); alternate cross-link involves residue lysine 364. Basic and acidic residues predominate over residues lysine 364–proline 379. The interval lysine 364–alanine 419 is disordered. Residue serine 365 is modified to Phosphoserine. The segment covering glutamine 393 to alanine 402 has biased composition (basic residues). Basic and acidic residues predominate over residues lysine 404–alanine 419.

It belongs to the universal ribosomal protein uL4 family. In terms of assembly, component of the large ribosomal subunit. May bind IPO9 with low affinity. Interacts with RBM3. Citrullinated by PADI4.

The protein localises to the cytoplasm. Component of the large ribosomal subunit. The ribosome is a large ribonucleoprotein complex responsible for the synthesis of proteins in the cell. In Mus musculus (Mouse), this protein is Large ribosomal subunit protein uL4 (Rpl4).